The following is a 362-amino-acid chain: MNTPKVNILHAPGQAAQLSRALISTCHTRPLLLAGSRVATSLHPTQTNLSSPSPRNFSTTSVTRLKDFFPAKETAYIRQTPPAWPHHGWTEEEMTSVVPEHRKPETVGDWLAWKLVRICRWATDIATGIRPEQQVDKHHPTTATSADKPLTEAQWLVRFIFLESIAGVPGMVAGMLRHLHSLRRLKRDNGWIETLLEESYNERMHLLTFMKMCEPGLLMKTLILGAQGVFFNAMFLSYLISPKITHRFVGYLEEEAVHTYTRCIREIEEGHLPKWSDEKFEIPEMAVRYWRMPEGKRTMKDLIHYIRADEAVHRGVNHTLSNLDQKEDPNPFVSDYKEGEGGRRPVNPALKPTGFERAEVIG.

Residues 1-64 constitute a mitochondrion transit peptide; sequence MNTPKVNILH…RNFSTTSVTR (64 aa). The helical transmembrane segment at 156 to 176 threads the bilayer; that stretch reads LVRFIFLESIAGVPGMVAGML. Fe cation contacts are provided by glutamate 163, glutamate 202, and histidine 205. Residues 222-242 form a helical membrane-spanning segment; the sequence is LILGAQGVFFNAMFLSYLISP. Fe cation is bound by residues glutamate 253, glutamate 310, and histidine 313.

The protein belongs to the alternative oxidase family. Homodimer; disulfide-linked. The cofactor is Fe cation.

Its subcellular location is the mitochondrion inner membrane. Its function is as follows. Catalyzes cyanide-resistant oxygen consumption. May increase respiration when the cytochrome respiratory pathway is restricted, or in response to low temperatures. The polypeptide is Alternative oxidase, mitochondrial (aod-1) (Neurospora crassa (strain ATCC 24698 / 74-OR23-1A / CBS 708.71 / DSM 1257 / FGSC 987)).